The primary structure comprises 734 residues: Ribosomal RNA large subunit methyltransferase K/L (734 aa).

Positions 49–167 (HAYRICMWSR…KTEHTYCLDL (119 aa)) constitute a THUMP domain.

The protein belongs to the methyltransferase superfamily. RlmKL family.

It is found in the cytoplasm. The catalysed reaction is guanosine(2445) in 23S rRNA + S-adenosyl-L-methionine = N(2)-methylguanosine(2445) in 23S rRNA + S-adenosyl-L-homocysteine + H(+). The enzyme catalyses guanosine(2069) in 23S rRNA + S-adenosyl-L-methionine = N(2)-methylguanosine(2069) in 23S rRNA + S-adenosyl-L-homocysteine + H(+). Specifically methylates the guanine in position 2445 (m2G2445) and the guanine in position 2069 (m7G2069) of 23S rRNA. This is Ribosomal RNA large subunit methyltransferase K/L from Acinetobacter baumannii (strain SDF).